We begin with the raw amino-acid sequence, 505 residues long: Histidine ammonia-lyase (505 aa).

A cross-link (5-imidazolinone (Ala-Gly)) is located at residues 141–143; it reads ASG. Ser-142 bears the 2,3-didehydroalanine (Ser) mark.

The protein belongs to the PAL/histidase family. Post-translationally, contains an active site 4-methylidene-imidazol-5-one (MIO), which is formed autocatalytically by cyclization and dehydration of residues Ala-Ser-Gly.

It is found in the cytoplasm. The enzyme catalyses L-histidine = trans-urocanate + NH4(+). It participates in amino-acid degradation; L-histidine degradation into L-glutamate; N-formimidoyl-L-glutamate from L-histidine: step 1/3. In Bacillus anthracis, this protein is Histidine ammonia-lyase.